The chain runs to 145 residues: RxLR effector protein BLR40 (145 aa).

The first 22 residues, Met-1–Thr-22, serve as a signal peptide directing secretion. The RxLR-dEER motif lies at Arg-44 to Arg-58.

The protein belongs to the RxLR effector family.

The protein localises to the secreted. The protein resides in the host cell membrane. Functionally, secreted effector that triggers a robust hypersensitive response (HR) in Lactuca sativa cv. Design that is resistant to multiple B.lactucae races, including Bl:24. The protein is RxLR effector protein BLR40 of Bremia lactucae (Lettuce downy mildew).